The chain runs to 146 residues: Benzoylsuccinyl-CoA thiolase subunit BbsA (146 aa).

Zn(2+) contacts are provided by Cys-42, Cys-45, Cys-55, and Cys-58.

The protein belongs to the BbsA family. As to quaternary structure, heterotetramer composed of two BbsA subunits and two BbsB subunits. Both BbsA and BbsB are essential for enzymatic activity.

The enzyme catalyses (S)-2-benzoylsuccinyl-CoA + CoA = benzoyl-CoA + succinyl-CoA. Its pathway is xenobiotic degradation; toluene degradation. Component of the BbsAB thiolase complex, which catalyzes the thiolytic cleavage of (S)-2-benzoylsuccinyl-CoA to succinyl-CoA and benzoyl-CoA, the final step of anaerobic toluene metabolism. The BbsA subunit critically contributes to an induced-fit process for productive binding of a CoA substrate into the active site of BbsB. The chain is Benzoylsuccinyl-CoA thiolase subunit BbsA from Geobacter metallireducens (strain ATCC 53774 / DSM 7210 / GS-15).